The chain runs to 146 residues: D-aminoacyl-tRNA deacylase (146 aa).

A Gly-cisPro motif, important for rejection of L-amino acids motif is present at residues 137 to 138 (GP).

The protein belongs to the DTD family. In terms of assembly, homodimer.

Its subcellular location is the cytoplasm. The enzyme catalyses glycyl-tRNA(Ala) + H2O = tRNA(Ala) + glycine + H(+). It catalyses the reaction a D-aminoacyl-tRNA + H2O = a tRNA + a D-alpha-amino acid + H(+). In terms of biological role, an aminoacyl-tRNA editing enzyme that deacylates mischarged D-aminoacyl-tRNAs. Also deacylates mischarged glycyl-tRNA(Ala), protecting cells against glycine mischarging by AlaRS. Acts via tRNA-based rather than protein-based catalysis; rejects L-amino acids rather than detecting D-amino acids in the active site. By recycling D-aminoacyl-tRNA to D-amino acids and free tRNA molecules, this enzyme counteracts the toxicity associated with the formation of D-aminoacyl-tRNA entities in vivo and helps enforce protein L-homochirality. This Bacillus cereus (strain ATCC 14579 / DSM 31 / CCUG 7414 / JCM 2152 / NBRC 15305 / NCIMB 9373 / NCTC 2599 / NRRL B-3711) protein is D-aminoacyl-tRNA deacylase.